Reading from the N-terminus, the 215-residue chain is Cytochrome b6 (215 aa).

A helical membrane pass occupies residues Ile32–Phe52. A heme c-binding site is contributed by Cys35. Heme b is bound by residues His86 and His100. A run of 3 helical transmembrane segments spans residues Ala90–Phe110, Leu116–Tyr136, and Leu186–Ile206. Heme b contacts are provided by His187 and His202.

Belongs to the cytochrome b family. PetB subfamily. The 4 large subunits of the cytochrome b6-f complex are cytochrome b6, subunit IV (17 kDa polypeptide, PetD), cytochrome f and the Rieske protein, while the 4 small subunits are PetG, PetL, PetM and PetN. The complex functions as a dimer. Requires heme b as cofactor. It depends on heme c as a cofactor.

The protein localises to the plastid. The protein resides in the chloroplast thylakoid membrane. Component of the cytochrome b6-f complex, which mediates electron transfer between photosystem II (PSII) and photosystem I (PSI), cyclic electron flow around PSI, and state transitions. In Nicotiana tomentosiformis (Tobacco), this protein is Cytochrome b6.